Here is a 178-residue protein sequence, read N- to C-terminus: Gamma-crystallin S (178 aa).

Ser-2 is subject to N-acetylserine. An N-terminal arm region spans residues 2 to 5 (SKSG). Beta/gamma crystallin 'Greek key' domains lie at 6–44 (TKIT…RVEG) and 45–87 (GTWA…RAVH). A connecting peptide region spans residues 88-93 (LSSGGQ). Beta/gamma crystallin 'Greek key' domains lie at 94 to 134 (YKIQ…KVLD) and 135 to 177 (GVWI…RRIV).

Belongs to the beta/gamma-crystallin family. As to quaternary structure, monomer.

Functionally, crystallins are the dominant structural components of the vertebrate eye lens. The protein is Gamma-crystallin S (CRYGS) of Canis lupus familiaris (Dog).